Reading from the N-terminus, the 198-residue chain is MPLGLLWLGLALLGALHAQAQDSTSDLIPAPPLSKVPLQQNFQDNQFQGKWYVVGLAGNAILREDKDPQKMYATIYELKEDKSYNVTSVLFRKKKCDYWIRTFVPGCQPGEFTLGNIKSYPGLTSYLVRVVSTNYNQHAMVFFKKVSQNREYFKITLYGRTKELTSELKENFIRFSKSLGLPENHIVFPVPIDQCIDG.

A signal peptide spans 1–20 (MPLGLLWLGLALLGALHAQA). A Pyrrolidone carboxylic acid modification is found at glutamine 21. An a carboxymycobactin-binding site is contributed by 72-74 (YAT). Asparagine 85 is a glycosylation site (N-linked (GlcNAc...) asparagine). Cysteine 96 and cysteine 195 are oxidised to a cystine. Position 126 (tyrosine 126) interacts with enterobactin. A carboxymycobactin contacts are provided by lysine 145, lysine 154, and tyrosine 158. Position 154 (lysine 154) interacts with enterobactin.

This sequence belongs to the calycin superfamily. Lipocalin family. Monomer. Homodimer; disulfide-linked. Heterodimer; disulfide-linked with MMP9. In terms of tissue distribution, detected in neutrophils (at protein level). Expressed in bone marrow and in tissues that are prone to exposure to microorganism. High expression is found in bone marrow as well as in uterus, prostate, salivary gland, stomach, appendix, colon, trachea and lung. Expressed in the medullary tubules of the kidney. Not found in the small intestine or peripheral blood leukocytes.

The protein resides in the secreted. It localises to the cytoplasmic granule lumen. The protein localises to the cytoplasmic vesicle lumen. Its function is as follows. Iron-trafficking protein involved in multiple processes such as apoptosis, innate immunity and renal development. Binds iron through association with 2,3-dihydroxybenzoic acid (2,3-DHBA), a siderophore that shares structural similarities with bacterial enterobactin, and delivers or removes iron from the cell, depending on the context. Iron-bound form (holo-24p3) is internalized following binding to the SLC22A17 (24p3R) receptor, leading to release of iron and subsequent increase of intracellular iron concentration. In contrast, association of the iron-free form (apo-24p3) with the SLC22A17 (24p3R) receptor is followed by association with an intracellular siderophore, iron chelation and iron transfer to the extracellular medium, thereby reducing intracellular iron concentration. Involved in apoptosis due to interleukin-3 (IL3) deprivation: iron-loaded form increases intracellular iron concentration without promoting apoptosis, while iron-free form decreases intracellular iron levels, inducing expression of the proapoptotic protein BCL2L11/BIM, resulting in apoptosis. Involved in innate immunity; limits bacterial proliferation by sequestering iron bound to microbial siderophores, such as enterobactin. Can also bind siderophores from M.tuberculosis. The chain is Neutrophil gelatinase-associated lipocalin (LCN2) from Homo sapiens (Human).